The chain runs to 488 residues: Ribulose bisphosphate carboxylase large chain (488 aa).

The substrate site is built by asparagine 127 and threonine 177. Lysine 179 functions as the Proton acceptor in the catalytic mechanism. Lysine 181 is a substrate binding site. Mg(2+) is bound by residues lysine 205, aspartate 207, and glutamate 208. Lysine 205 is modified (N6-carboxylysine). Histidine 297 serves as the catalytic Proton acceptor. Positions 298, 330, and 382 each coordinate substrate.

It belongs to the RuBisCO large chain family. Type I subfamily. In terms of assembly, heterohexadecamer of 8 large chains and 8 small chains. Mg(2+) serves as cofactor.

Its subcellular location is the plastid. The protein resides in the chloroplast. The enzyme catalyses 2 (2R)-3-phosphoglycerate + 2 H(+) = D-ribulose 1,5-bisphosphate + CO2 + H2O. It catalyses the reaction D-ribulose 1,5-bisphosphate + O2 = 2-phosphoglycolate + (2R)-3-phosphoglycerate + 2 H(+). In terms of biological role, ruBisCO catalyzes two reactions: the carboxylation of D-ribulose 1,5-bisphosphate, the primary event in carbon dioxide fixation, as well as the oxidative fragmentation of the pentose substrate in the photorespiration process. Both reactions occur simultaneously and in competition at the same active site. This is Ribulose bisphosphate carboxylase large chain from Olisthodiscus luteus (Marine phytoflagellate).